The sequence spans 741 residues: Zinc finger and BTB domain-containing protein 20 (741 aa).

Over residues 1–17 the composition is skewed to basic and acidic residues; the sequence is MLERKKPKTAENQKASE. A disordered region spans residues 1 to 28; it reads MLERKKPKTAENQKASEENEITQPGGSS. Residues 104–167 form the BTB domain; the sequence is CDVTVRIHGS…MYSGVLRVSQ (64 aa). The tract at residues 203–235 is disordered; the sequence is GIQDSGQDTPRGTPESGTSGQSSDTESGYLQSH. Residues 206–235 show a composition bias toward polar residues; sequence DSGQDTPRGTPESGTSGQSSDTESGYLQSH. T211 is modified (phosphothreonine). K330 participates in a covalent cross-link: Glycyl lysine isopeptide (Lys-Gly) (interchain with G-Cter in SUMO1); alternate. K330 is covalently cross-linked (Glycyl lysine isopeptide (Lys-Gly) (interchain with G-Cter in SUMO2); alternate). The tract at residues 350–440 is disordered; sequence RNESEECTED…SSPERSNESE (91 aa). The residue at position 353 (S353) is a Phosphoserine. Acidic residues predominate over residues 354–367; that stretch reads EECTEDTDQAEGTE. T357 carries the phosphothreonine modification. Residue K371 forms a Glycyl lysine isopeptide (Lys-Gly) (interchain with G-Cter in SUMO2) linkage. The span at 404-423 shows a compositional bias: low complexity; it reads AEPAQPEQAAEAPAESSAQP. 4 C2H2-type zinc fingers span residues 578-600, 606-628, 634-656, and 662-684; these read YECT…MFVH, HQCS…MVTH, YQCS…MRLH, and YECY…VALH. A phosphothreonine mark is found at T690 and T695. A C2H2-type 5 zinc finger spans residues 715 to 737; it reads YVCSVCPAKFDQIEQFNDHMRMH. K723 is covalently cross-linked (Glycyl lysine isopeptide (Lys-Gly) (interchain with G-Cter in SUMO2)).

As to quaternary structure, can homodimerize. Binds to DNA. Post-translationally, sumoylated with SUMO1. Specifically expressed in early hippocampal neurons, cerebellar granule cells and gliogenic progenitors as well as in differentiated glia. Expressed in adult and aged myogenic satellite cells.

The protein localises to the nucleus. May be a transcription factor that may be involved in hematopoiesis, oncogenesis, and immune responses. Plays a role in postnatal myogenesis, may be involved in the regulation of satellite cells self-renewal. The polypeptide is Zinc finger and BTB domain-containing protein 20 (Zbtb20) (Mus musculus (Mouse)).